We begin with the raw amino-acid sequence, 69 residues long: MFDKKKLDRINELAKKNKEGILSADEIKEREILRKEYLENFRAHFRSRLDSVKVVSPEEYEQYMKNNKN.

It belongs to the UPF0291 family.

It localises to the cytoplasm. This Clostridioides difficile (strain 630) (Peptoclostridium difficile) protein is UPF0291 protein CD630_10710.